The sequence spans 1285 residues: DNA polymerase II large subunit (1285 aa).

Positions 565-586 (TRIGGRMGRPGKSKPREMRPPP) are disordered.

Belongs to the archaeal DNA polymerase II family. As to quaternary structure, heterodimer of a large subunit and a small subunit. Post-translationally, this protein undergoes a protein self splicing that involves a post-translational excision of the intervening region (intein) followed by peptide ligation.

It catalyses the reaction DNA(n) + a 2'-deoxyribonucleoside 5'-triphosphate = DNA(n+1) + diphosphate. The enzyme catalyses Exonucleolytic cleavage in the 3'- to 5'-direction to yield nucleoside 5'-phosphates.. Possesses two activities: a DNA synthesis (polymerase) and an exonucleolytic activity that degrades single-stranded DNA in the 3'- to 5'-direction. Has a template-primer preference which is characteristic of a replicative DNA polymerase. In Methanoculleus marisnigri (strain ATCC 35101 / DSM 1498 / JR1), this protein is DNA polymerase II large subunit.